Reading from the N-terminus, the 677-residue chain is DNA ligase (677 aa).

NAD(+)-binding positions include Asp35–Asp39, Ser84–Leu85, and Glu116. The N6-AMP-lysine intermediate role is filled by Lys118. NAD(+) contacts are provided by Arg139, Glu176, Lys295, and Lys319. The Zn(2+) site is built by Cys413, Cys416, Cys431, and Cys437. In terms of domain architecture, BRCT spans Leu596–Gly677.

It belongs to the NAD-dependent DNA ligase family. LigA subfamily. The cofactor is Mg(2+). Requires Mn(2+) as cofactor.

It catalyses the reaction NAD(+) + (deoxyribonucleotide)n-3'-hydroxyl + 5'-phospho-(deoxyribonucleotide)m = (deoxyribonucleotide)n+m + AMP + beta-nicotinamide D-nucleotide.. Its function is as follows. DNA ligase that catalyzes the formation of phosphodiester linkages between 5'-phosphoryl and 3'-hydroxyl groups in double-stranded DNA using NAD as a coenzyme and as the energy source for the reaction. It is essential for DNA replication and repair of damaged DNA. In Pseudoalteromonas atlantica (strain T6c / ATCC BAA-1087), this protein is DNA ligase.